The primary structure comprises 142 residues: Nitrogen fixation protein NifU 2 (142 aa).

Positions 1–36 (MKDLFDESLTLDTGSAAPGTAPGRPRRRQPAGGKAP) are disordered. Residues 14-23 (GSAAPGTAPG) show a composition bias toward low complexity.

This sequence belongs to the NifU family.

Functionally, may be involved in the formation or repair of [Fe-S] clusters present in iron-sulfur proteins. This Rhodobacter capsulatus (Rhodopseudomonas capsulata) protein is Nitrogen fixation protein NifU 2 (nifU2).